The following is a 212-amino-acid chain: Claudin-7-A (212 aa).

Residues 1-7 (MANSGVQ) are Cytoplasmic-facing. The chain crosses the membrane as a helical span at residues 8-28 (LLGFGLSLIGIIGLIVGTILP). Residues 29 to 81 (QWKMSAYVGDSIITAVATYQGLWMSCAFQSTGQLQCKIYDSILQLDSDLQATR) are Extracellular-facing. The chain crosses the membrane as a helical span at residues 82-102 (ALMIVGIIVSIAGLGVASIGM). Topologically, residues 103 to 119 (KCTTCGADDKVRKTRTA) are cytoplasmic. Residues 120–140 (MTGGIILLVGALCAVVACSWF) form a helical membrane-spanning segment. Over 141–162 (AHNVIRAFYNPFTPVNTKFEFG) the chain is Extracellular. Residues 163 to 183 (AAIFIAWGGSFLDVLGGAMLA) traverse the membrane as a helical segment. At 184–212 (ASCPRSKQVSKYPKSNSTRSANGSNKEYV) the chain is on the cytoplasmic side. The segment at 191-212 (QVSKYPKSNSTRSANGSNKEYV) is disordered.

It belongs to the claudin family.

Its subcellular location is the cell junction. It is found in the tight junction. The protein resides in the cell membrane. Plays a major role in tight junction-specific obliteration of the intercellular space. The protein is Claudin-7-A of Danio rerio (Zebrafish).